The chain runs to 1433 residues: DNA-directed RNA polymerase subunit beta' (1433 aa).

Positions 60, 62, 75, and 78 each coordinate Zn(2+). Mg(2+)-binding residues include Asp449, Asp451, and Asp453. Zn(2+)-binding residues include Cys777, Cys851, Cys858, and Cys861. Acidic residues-rich tracts occupy residues 1383–1393 (DSEEEEEELSE) and 1411–1433 (EEDE…DDDD). The segment at 1383-1433 (DSEEEEEELSELSEAAPVSTATLSKLVAEEDEDEDELEEEADDSDDEDDDD) is disordered.

This sequence belongs to the RNA polymerase beta' chain family. As to quaternary structure, the RNAP catalytic core consists of 2 alpha, 1 beta, 1 beta' and 1 omega subunit. When a sigma factor is associated with the core the holoenzyme is formed, which can initiate transcription. Requires Mg(2+) as cofactor. Zn(2+) serves as cofactor.

The catalysed reaction is RNA(n) + a ribonucleoside 5'-triphosphate = RNA(n+1) + diphosphate. DNA-dependent RNA polymerase catalyzes the transcription of DNA into RNA using the four ribonucleoside triphosphates as substrates. This is DNA-directed RNA polymerase subunit beta' from Leptospira biflexa serovar Patoc (strain Patoc 1 / Ames).